The chain runs to 547 residues: MASKEILFDTKAREKLSRGVDKLANAVKVTLGPKGRNVVIEKSFGSPVITKDGVSVAKEIELEDKFENMGAQMVKEVASKTSDIAGDGTTTATILAQAIYREGVKLVAAGRNPMAIKRGVDKAVESLVRELGNLAKPTRDQKEIAQVGTISANSDSTIGNIIAEAMSKVGKEGVITVEEAKGLETTLEVVEGMQFDRGYLSPYFVTDPEKMVCELDEPFILCNEKKISTMKDMLPVLEQVAKMQRPLVIIAEDVDGEALATLVVNKLRGALQVVAIKAPGFGERRKAMLQDIAVLTGGQVVSEDMGIKLENISVADLGTAKRVVIDKENTTIVDGAGKGDDIKARVKQIRAQIEETTSDYDREKLQERLAKLVGGVAVIHVGAATETEMKEKKDRVEDALNATRAAVEEGIVPGGGTALVRVAKVLDDIKPADDDETAGVNIIRRAIEEPLRQIASNAGFEGSIVVERVREGKDGFGFNAATGEYEDLIGVGVIDPKKVTRIALQNAASVASLLLTTECAIAEKPEPKKDMPMPGGMGGMGGMGGMY.

Residues 30-33 (TLGP), K51, 87-91 (DGTTT), G415, 479-481 (NAA), and D495 each bind ATP.

The protein belongs to the chaperonin (HSP60) family. As to quaternary structure, forms a cylinder of 14 subunits composed of two heptameric rings stacked back-to-back. Interacts with the co-chaperonin GroES.

The protein localises to the cytoplasm. It carries out the reaction ATP + H2O + a folded polypeptide = ADP + phosphate + an unfolded polypeptide.. Functionally, together with its co-chaperonin GroES, plays an essential role in assisting protein folding. The GroEL-GroES system forms a nano-cage that allows encapsulation of the non-native substrate proteins and provides a physical environment optimized to promote and accelerate protein folding. This chain is Chaperonin GroEL, found in Nitratidesulfovibrio vulgaris (strain ATCC 29579 / DSM 644 / CCUG 34227 / NCIMB 8303 / VKM B-1760 / Hildenborough) (Desulfovibrio vulgaris).